We begin with the raw amino-acid sequence, 445 residues long: NAD-specific glutamate dehydrogenase (445 aa).

K124 is a catalytic residue. NAD(+) is bound at residue 235–241; it reads GFGNVAW.

This sequence belongs to the Glu/Leu/Phe/Val dehydrogenases family. As to quaternary structure, homohexamer.

The enzyme catalyses L-glutamate + NAD(+) + H2O = 2-oxoglutarate + NH4(+) + NADH + H(+). The sequence is that of NAD-specific glutamate dehydrogenase (gdhB) from Bacteroides fragilis (strain YCH46).